A 921-amino-acid polypeptide reads, in one-letter code: Ribosome-releasing factor 2, mitochondrial (921 aa).

The transit peptide at 1 to 55 (MVSALLLRARQNGRAARCLDYPKVKCWALASLPKSSLEKPGFSQVRRFSVFHPQS) directs the protein to the mitochondrion. In terms of domain architecture, tr-type G spans 60 to 368 (DLTRNIGIIA…SVVDLLPSPQ (309 aa)). Residues 69–76 (AHIDAGKT), 152–156 (DTPGH), and 206–209 (NKMD) each bind GTP.

The protein belongs to the TRAFAC class translation factor GTPase superfamily. Classic translation factor GTPase family. EF-G/EF-2 subfamily.

The protein resides in the mitochondrion. Functionally, mitochondrial GTPase that mediates the disassembly of ribosomes from messenger RNA at the termination of mitochondrial protein biosynthesis. Not involved in the GTP-dependent ribosomal translocation step during translation elongation. The sequence is that of Ribosome-releasing factor 2, mitochondrial (mef2) from Emericella nidulans (strain FGSC A4 / ATCC 38163 / CBS 112.46 / NRRL 194 / M139) (Aspergillus nidulans).